The following is a 359-amino-acid chain: Homeotic protein knotted-1 (359 aa).

Disordered regions lie at residues 1–34 (MEEITQHFGVGASSHGHGHGQHHHHHHHHHPWAS) and 213–232 (LSSGSSEEDQEGSGGETELP). Residues 16 to 31 (GHGHGQHHHHHHHHHP) are compositionally biased toward basic residues. The 21-residue stretch at 242–262 (ELKHHLLKKYSGYLSSLKQEL) folds into the ELK domain. The homeobox; TALE-type DNA-binding region spans 263–326 (SKKKKKGKLP…NQRKRHWKPS (64 aa)).

The protein belongs to the TALE/KNOX homeobox family. As to quaternary structure, forms homodimers. Binds to MBP2C; this interaction reduces RNA binding capacity. As to expression, expressed in apical meristems of vegetative and floral stems as well as in the underlying ground meristem. Specifically expressed in vascular bundles developing both in the leaf and stem. Very low levels of expression in leaves.

The protein resides in the nucleus. Its subcellular location is the cell junction. It localises to the plasmodesma. It is found in the cytoplasm. In terms of biological role, binds to RNA. Possible transcription factor that regulates genes involved in development. Mutations in KN-1 alter leaf development. Foci of cells along the lateral vein do not differentiate properly but continue to divide, forming knots. May participate in the switch from indeterminate to determinate cell fates. Probably binds to the DNA sequence 5'-TGAC-3'. The sequence is that of Homeotic protein knotted-1 (KN-1) from Zea mays (Maize).